The primary structure comprises 112 residues: Putative movement protein (112 aa).

The helical transmembrane segment at 27 to 47 (IGIIMLCIVGIVVLWVLIILC) threads the bilayer. A disordered region spans residues 77–112 (TGTPFEETGPHRERRWAERRTEATNQNNNDNVNRFS). Basic and acidic residues predominate over residues 84-98 (TGPHRERRWAERRTE). A compositionally biased stretch (polar residues) spans 101 to 112 (NQNNNDNVNRFS).

The protein belongs to the nanovirus movement protein family.

The protein resides in the host cell membrane. In terms of biological role, may transport viral genome to neighboring plant cells directly through plasmosdesmata, without any budding. The movement protein allows efficient cell to cell propagation, by bypassing the host cell wall barrier. The sequence is that of Putative movement protein (DNA-M) from Subterranean clover stunt virus (strain F) (SCSV).